The chain runs to 242 residues: Carboxy-S-adenosyl-L-methionine synthase (242 aa).

S-adenosyl-L-methionine is bound by residues Y39, 64–66 (GCS), 89–90 (DN), 117–118 (DI), N132, and R199.

This sequence belongs to the class I-like SAM-binding methyltransferase superfamily. Cx-SAM synthase family. As to quaternary structure, homodimer.

It catalyses the reaction prephenate + S-adenosyl-L-methionine = carboxy-S-adenosyl-L-methionine + 3-phenylpyruvate + H2O. Catalyzes the conversion of S-adenosyl-L-methionine (SAM) to carboxy-S-adenosyl-L-methionine (Cx-SAM). The polypeptide is Carboxy-S-adenosyl-L-methionine synthase (Vibrio atlanticus (strain LGP32) (Vibrio splendidus (strain Mel32))).